The primary structure comprises 295 residues: Nicotinate-nucleotide pyrophosphorylase [carboxylating] (295 aa).

Substrate-binding positions include R107, 142–144 (TRK), R166, K176, E206, D227, and 256–258 (SGG).

Belongs to the NadC/ModD family. In terms of assembly, hexamer formed by 3 homodimers.

It localises to the cytoplasm. Its subcellular location is the nucleus. It catalyses the reaction nicotinate beta-D-ribonucleotide + CO2 + diphosphate = quinolinate + 5-phospho-alpha-D-ribose 1-diphosphate + 2 H(+). It functions in the pathway cofactor biosynthesis; NAD(+) biosynthesis; nicotinate D-ribonucleotide from quinolinate: step 1/1. Its function is as follows. Involved in the catabolism of quinolinic acid (QA). The sequence is that of Nicotinate-nucleotide pyrophosphorylase [carboxylating] (BNA6) from Saccharomyces cerevisiae (strain ATCC 204508 / S288c) (Baker's yeast).